The primary structure comprises 666 residues: Pantothenate kinase 1 (666 aa).

The protein belongs to the type II pantothenate kinase family.

The enzyme catalyses (R)-pantothenate + ATP = (R)-4'-phosphopantothenate + ADP + H(+). The protein operates within cofactor biosynthesis; coenzyme A biosynthesis; CoA from (R)-pantothenate: step 1/5. Regulated by feedback inhibition by malonyl-CoA. Its function is as follows. Catalyzes the phosphorylation of pantothenate the first step in CoA biosynthesis. May play a role in the physiological regulation of the intracellular CoA concentration. This Oryza sativa subsp. japonica (Rice) protein is Pantothenate kinase 1.